We begin with the raw amino-acid sequence, 417 residues long: D-amino acid dehydrogenase (417 aa).

Residue 3–17 (VVILGSGVVGVSTAW) participates in FAD binding.

The protein belongs to the DadA oxidoreductase family. FAD serves as cofactor.

The catalysed reaction is a D-alpha-amino acid + A + H2O = a 2-oxocarboxylate + AH2 + NH4(+). It functions in the pathway amino-acid degradation; D-alanine degradation; NH(3) and pyruvate from D-alanine: step 1/1. Functionally, oxidative deamination of D-amino acids. In Pectobacterium carotovorum subsp. carotovorum (strain PC1), this protein is D-amino acid dehydrogenase.